Here is a 178-residue protein sequence, read N- to C-terminus: Large ribosomal subunit protein bL25 (178 aa).

Belongs to the bacterial ribosomal protein bL25 family. CTC subfamily. As to quaternary structure, part of the 50S ribosomal subunit; part of the 5S rRNA/L5/L18/L25 subcomplex. Contacts the 5S rRNA. Binds to the 5S rRNA independently of L5 and L18.

Its function is as follows. This is one of the proteins that binds to the 5S RNA in the ribosome where it forms part of the central protuberance. The chain is Large ribosomal subunit protein bL25 from Helicobacter pylori (strain G27).